Consider the following 385-residue polypeptide: 8-amino-7-oxononanoate synthase (385 aa).

Arg-21 lines the substrate pocket. Residue 108-109 (GF) coordinates pyridoxal 5'-phosphate. His-133 is a binding site for substrate. Ser-179, His-207, and Thr-233 together coordinate pyridoxal 5'-phosphate. An N6-(pyridoxal phosphate)lysine modification is found at Lys-236. Thr-352 is a binding site for substrate.

The protein belongs to the class-II pyridoxal-phosphate-dependent aminotransferase family. BioF subfamily. In terms of assembly, homodimer. Pyridoxal 5'-phosphate serves as cofactor.

The catalysed reaction is 6-carboxyhexanoyl-[ACP] + L-alanine + H(+) = (8S)-8-amino-7-oxononanoate + holo-[ACP] + CO2. Its pathway is cofactor biosynthesis; biotin biosynthesis. Functionally, catalyzes the decarboxylative condensation of pimeloyl-[acyl-carrier protein] and L-alanine to produce 8-amino-7-oxononanoate (AON), [acyl-carrier protein], and carbon dioxide. The protein is 8-amino-7-oxononanoate synthase of Salmonella dublin (strain CT_02021853).